A 311-amino-acid chain; its full sequence is DNA-directed RNA polymerase subunit alpha (311 aa).

The tract at residues 1-227 (MAQFQIECIE…NLFCSLRNLD (227 aa)) is alpha N-terminal domain (alpha-NTD). An alpha C-terminal domain (alpha-CTD) region spans residues 239-311 (DKKISQVLIE…GISLPKEKSD (73 aa)).

This sequence belongs to the RNA polymerase alpha chain family. In terms of assembly, in plastids the minimal PEP RNA polymerase catalytic core is composed of four subunits: alpha, beta, beta', and beta''. When a (nuclear-encoded) sigma factor is associated with the core the holoenzyme is formed, which can initiate transcription.

The protein resides in the plastid. The protein localises to the chloroplast. The enzyme catalyses RNA(n) + a ribonucleoside 5'-triphosphate = RNA(n+1) + diphosphate. In terms of biological role, DNA-dependent RNA polymerase catalyzes the transcription of DNA into RNA using the four ribonucleoside triphosphates as substrates. This chain is DNA-directed RNA polymerase subunit alpha, found in Pyropia yezoensis (Susabi-nori).